We begin with the raw amino-acid sequence, 490 residues long: Probable cytosol aminopeptidase (490 aa).

Mn(2+) contacts are provided by K262 and D267. K274 is a catalytic residue. Positions 285, 344, and 346 each coordinate Mn(2+). Residue R348 is part of the active site.

The protein belongs to the peptidase M17 family. Mn(2+) serves as cofactor.

Its subcellular location is the cytoplasm. It carries out the reaction Release of an N-terminal amino acid, Xaa-|-Yaa-, in which Xaa is preferably Leu, but may be other amino acids including Pro although not Arg or Lys, and Yaa may be Pro. Amino acid amides and methyl esters are also readily hydrolyzed, but rates on arylamides are exceedingly low.. It catalyses the reaction Release of an N-terminal amino acid, preferentially leucine, but not glutamic or aspartic acids.. In terms of biological role, presumably involved in the processing and regular turnover of intracellular proteins. Catalyzes the removal of unsubstituted N-terminal amino acids from various peptides. In Xanthomonas oryzae pv. oryzae (strain MAFF 311018), this protein is Probable cytosol aminopeptidase.